The following is a 151-amino-acid chain: Gametocyte-specific factor 1-like (151 aa).

2 consecutive CHHC U11-48K-type zinc fingers follow at residues 6–33 and 40–67; these read IEIC…RKKN and MASC…VNRS. Zn(2+) is bound by residues Cys-9, His-15, His-25, Cys-29, Cys-43, His-49, His-59, and Cys-63. The disordered stretch occupies residues 130-151; it reads QESRGGDQCPEDPQTRTRKANF.

It belongs to the UPF0224 (FAM112) family.

The sequence is that of Gametocyte-specific factor 1-like (Gtsf1l) from Mus musculus (Mouse).